The chain runs to 499 residues: Glycerol kinase (499 aa).

ADP is bound at residue Thr13. The ATP site is built by Thr13, Thr14, and Ser15. Thr13 contacts sn-glycerol 3-phosphate. Arg17 serves as a coordination point for ADP. 4 residues coordinate sn-glycerol 3-phosphate: Arg83, Glu84, Tyr135, and Asp244. Residues Arg83, Glu84, Tyr135, Asp244, and Gln245 each coordinate glycerol. The ADP site is built by Thr266 and Gly310. Residues Thr266, Gly310, Gln314, and Gly411 each contribute to the ATP site. 2 residues coordinate ADP: Gly411 and Asn415.

This sequence belongs to the FGGY kinase family.

The catalysed reaction is glycerol + ATP = sn-glycerol 3-phosphate + ADP + H(+). Its pathway is polyol metabolism; glycerol degradation via glycerol kinase pathway; sn-glycerol 3-phosphate from glycerol: step 1/1. Its activity is regulated as follows. Inhibited by fructose 1,6-bisphosphate (FBP). Functionally, key enzyme in the regulation of glycerol uptake and metabolism. Catalyzes the phosphorylation of glycerol to yield sn-glycerol 3-phosphate. The polypeptide is Glycerol kinase (Pseudothermotoga lettingae (strain ATCC BAA-301 / DSM 14385 / NBRC 107922 / TMO) (Thermotoga lettingae)).